Here is a 451-residue protein sequence, read N- to C-terminus: DNA polymerase delta subunit 3 (451 aa).

Disordered stretches follow at residues 187-241 (SQAK…AASS), 259-386 (KQTP…KVLR), and 404-451 (AWES…FAKK). Over residues 200-216 (PSTSQVKEAPKASQTVE) the composition is skewed to polar residues. The span at 225–241 (SAPAKKGSSAPKSAASS) shows a compositional bias: low complexity. The segment covering 306–316 (QREEELRRMME) has biased composition (basic and acidic residues). A compositionally biased stretch (acidic residues) spans 329-353 (EEEEEEEEEEESEHEQLPAEEEPMA). Over residues 354 to 366 (EEPKAPEPVKEEP) the composition is skewed to basic and acidic residues. Over residues 376–386 (GRRRGKRKVLR) the composition is skewed to basic residues. The short motif at 441–448 (QGSIMSWF) is the PIP-box element.

In terms of assembly, component of the DNA polymerase delta complex which consists of PolD1, PolD2, PolD3 and PolD4, with PolD1 bearing DNA polymerase and 3' to 5' proofreading exonuclease activities. Directly interacts with PCNA.

Its subcellular location is the nucleus. Functionally, accessory component of the DNA polymerase delta complex. The complex is required for the maintenance of genome integrity, acting in concert with the sliding clamp processivity factor PCNA. The sequence is that of DNA polymerase delta subunit 3 from Chaetomium thermophilum (strain DSM 1495 / CBS 144.50 / IMI 039719) (Thermochaetoides thermophila).